A 72-amino-acid polypeptide reads, in one-letter code: MAKEDCIEMEGTVLDTLPNTMFRVELENGHVVTAHISGKMRKNYIRILTGDKVTCEMTPYDLSKGRIIYRAR.

The S1-like domain occupies M1 to R72.

This sequence belongs to the IF-1 family. As to quaternary structure, component of the 30S ribosomal translation pre-initiation complex which assembles on the 30S ribosome in the order IF-2 and IF-3, IF-1 and N-formylmethionyl-tRNA(fMet); mRNA recruitment can occur at any time during PIC assembly.

Its subcellular location is the cytoplasm. Its function is as follows. One of the essential components for the initiation of protein synthesis. Stabilizes the binding of IF-2 and IF-3 on the 30S subunit to which N-formylmethionyl-tRNA(fMet) subsequently binds. Helps modulate mRNA selection, yielding the 30S pre-initiation complex (PIC). Upon addition of the 50S ribosomal subunit IF-1, IF-2 and IF-3 are released leaving the mature 70S translation initiation complex. The chain is Translation initiation factor IF-1 from Pseudoalteromonas atlantica (strain T6c / ATCC BAA-1087).